Here is a 142-residue protein sequence, read N- to C-terminus: Small ribosomal subunit protein uS12 (142 aa).

The segment at 1 to 44 (MTNGKYAARKLKKDRQQRRWSDSEYARRERGLGKKSDPLEGAPQ) is disordered. Residues 7–16 (AARKLKKDRQ) show a composition bias toward basic residues. The segment covering 17-38 (QRRWSDSEYARRERGLGKKSDP) has biased composition (basic and acidic residues).

This sequence belongs to the universal ribosomal protein uS12 family. Part of the 30S ribosomal subunit.

Its function is as follows. With S4 and S5 plays an important role in translational accuracy. Located at the interface of the 30S and 50S subunits. The chain is Small ribosomal subunit protein uS12 from Halobacterium salinarum (strain ATCC 29341 / DSM 671 / R1).